Here is a 394-residue protein sequence, read N- to C-terminus: Mannosyl-3-phosphoglycerate synthase (394 aa).

This sequence belongs to the glycosyltransferase 2 family. Mg(2+) is required as a cofactor.

It is found in the cytoplasm. It catalyses the reaction (2R)-3-phosphoglycerate + GDP-alpha-D-mannose = 2-O-(alpha-D-mannosyl)-3-phosphoglycerate + GDP + H(+). Its pathway is carbohydrate biosynthesis; 2-(alpha-D-mannosyl)-D-glycerate biosynthesis; 2-(alpha-D-mannosyl)-D-glycerate from GDP-alpha-D-mannose (MPG route): step 1/2. Its function is as follows. Transfers a mannosyl group from GDP-mannose to phosphoglycerate to form mannosyl-3-phosphoglycerate (MPG). The enzyme is absolutely specific for GDP-mannose and 3-phosphoglycerate, and transfers the mannosyl group with retention of configuration. The sequence is that of Mannosyl-3-phosphoglycerate synthase (mngA) from Pyrococcus horikoshii (strain ATCC 700860 / DSM 12428 / JCM 9974 / NBRC 100139 / OT-3).